The following is a 998-amino-acid chain: Probable protein kinase DDB_G0277539 (998 aa).

Disordered regions lie at residues 1–34, 65–207, 265–284, 316–367, 380–420, and 435–489; these read MDFP…DFDQ, CEDQ…TNEF, INNN…FSSS, SNGS…NYSS, ERTN…PNSI, and RLQS…NNNN. Residues 23–32 are compositionally biased toward acidic residues; the sequence is YDDDDDDDDF. Residues 70–139 show a composition bias toward low complexity; it reads QQQQQQSSSP…NNNNNNNNNN (70 aa). The segment covering 140 to 150 has biased composition (basic residues); it reads SHHHHLRKGRR. Over residues 166-177 the composition is skewed to polar residues; that stretch reads ASLSSTKTNMFP. Low complexity-rich tracts occupy residues 184–203 and 265–274; these read SSPS…QSQQ and INNNYNNNNN. Positions 316–328 are enriched in polar residues; the sequence is SNGSYNKGNTFPS. Basic and acidic residues predominate over residues 330-340; it reads EVKRVRPDQRA. 2 stretches are compositionally biased toward low complexity: residues 393–415 and 450–489; these read NVNN…NNNN and NNNN…NNNN. Positions 508–849 constitute a Protein kinase domain; sequence FQELDLIGEG…AEQLLEHPLI (342 aa). ATP contacts are provided by residues 514-522 and Lys-537; that span reads IGEGSFGHV. Residue Asp-631 is the Proton acceptor of the active site. Residues Asn-636 and Glu-677 each coordinate Mg(2+).

It belongs to the protein kinase superfamily. Ser/Thr protein kinase family. WEE1 subfamily.

It catalyses the reaction L-seryl-[protein] + ATP = O-phospho-L-seryl-[protein] + ADP + H(+). It carries out the reaction L-threonyl-[protein] + ATP = O-phospho-L-threonyl-[protein] + ADP + H(+). The protein is Probable protein kinase DDB_G0277539 of Dictyostelium discoideum (Social amoeba).